The chain runs to 94 residues: MSRSVKKGPYIQEVLLKRINEMNKNGEKKVLKTWSRSSTVFPQMIGHTIAVHDGRKHVPVYITEDMVGHKLGEFVLTRTYRGHDDKSEKSSRLR.

Belongs to the universal ribosomal protein uS19 family.

Protein S19 forms a complex with S13 that binds strongly to the 16S ribosomal RNA. The chain is Small ribosomal subunit protein uS19 from Clostridium botulinum (strain Hall / ATCC 3502 / NCTC 13319 / Type A).